The following is a 151-amino-acid chain: Arginine repressor (151 aa).

Belongs to the ArgR family.

It is found in the cytoplasm. Its pathway is amino-acid biosynthesis; L-arginine biosynthesis [regulation]. Functionally, regulates arginine biosynthesis genes. In Haemophilus influenzae (strain PittGG), this protein is Arginine repressor.